A 1012-amino-acid polypeptide reads, in one-letter code: RAS protein activator like-3 (1012 aa).

Disordered regions lie at residues 1–128, 147–196, and 208–229; these read MDPP…TPDV, GNED…QIHN, and KKAK…ALGS. Over residues 7–21 the composition is skewed to polar residues; it reads SRASQTQPVAPSPLT. Serine 18 carries the post-translational modification Phosphoserine. The span at 27–39 shows a compositional bias: gly residues; it reads SGGGAEKGAGGFR. The segment covering 50 to 62 has biased composition (polar residues); sequence QSHQETTASSQPA. Serine 51 is subject to Phosphoserine. Over residues 100–113 the composition is skewed to acidic residues; it reads SEPEPENPEPEPEL. A phosphoserine mark is found at serine 160, serine 162, serine 163, and serine 166. The span at 160–171 shows a compositional bias: low complexity; that stretch reads SASSESSIHVAS. The segment covering 175–186 has biased composition (basic and acidic residues); the sequence is KDPDRTPGKTDP. The 102-residue stretch at 193 to 294 folds into the PH domain; that stretch reads QIHNVRGLLK…WIEDLRRHFQ (102 aa). Phosphoserine is present on residues serine 212, serine 225, serine 229, and serine 232. Position 235 is a phosphothreonine (threonine 235). In terms of domain architecture, C2 spans 285 to 405; sequence WIEDLRRHFQ…APAAGLERWF (121 aa). A Ras-GAP domain is found at 475-683; the sequence is GRAQALVTDL…PAMQHFLDQV (209 aa). The tract at residues 752 to 887 is disordered; sequence PAPRTQGHSS…DKDQALGTHR (136 aa). Serine 788 and serine 791 each carry phosphoserine. Positions 826–841 are enriched in basic residues; sequence PARRRPSAGPRPRPKG. A coiled-coil region spans residues 889–989; it reads VGKLAELQCE…KDTIQNLQLL (101 aa). Positions 990–999 are enriched in polar residues; sequence PRTSESQSQP. Residues 990–1012 are disordered; sequence PRTSESQSQPVPLKAPCINGDTT.

Its subcellular location is the cytoplasm. The protein resides in the cell cortex. Its function is as follows. Functions as a Ras GTPase-activating protein. Plays an important role in the expansion and functions of natural killer T (NKT) cells in the liver by negatively regulating RAS activity and the down-stream ERK signaling pathway. The sequence is that of RAS protein activator like-3 (RASAL3) from Bos taurus (Bovine).